Here is a 180-residue protein sequence, read N- to C-terminus: Inner membrane-spanning protein YciB (180 aa).

5 helical membrane-spanning segments follow: residues 25 to 45, 54 to 74, 76 to 96, 118 to 138, and 150 to 170; these read QNATLYMLITAIICVTICYFV, IISVSVLLVSGIITLISGNSI, IKIKPTILYVIFGIIFLMSGI, ITLSYRAAAFFFFMAVVNEIV, and FKVFGVIPITFIFILLQLPLL.

The protein belongs to the YciB family.

The protein localises to the cell inner membrane. Functionally, plays a role in cell envelope biogenesis, maintenance of cell envelope integrity and membrane homeostasis. The polypeptide is Inner membrane-spanning protein YciB (Rickettsia canadensis (strain McKiel)).